A 126-amino-acid polypeptide reads, in one-letter code: Glycine--tRNA ligase beta subunit (126 aa).

Belongs to the class-II aminoacyl-tRNA synthetase family. In terms of assembly, tetramer of two alpha and two beta subunits.

It localises to the cytoplasm. It carries out the reaction tRNA(Gly) + glycine + ATP = glycyl-tRNA(Gly) + AMP + diphosphate. The sequence is that of Glycine--tRNA ligase beta subunit (glyS) from Neisseria gonorrhoeae.